A 1077-amino-acid chain; its full sequence is Rap guanine nucleotide exchange factor 1 (1077 aa).

Leu57 is covalently cross-linked (Glycyl lysine isopeptide (Lys-Gly) (interchain with G-Cter in SUMO2)). Disordered regions lie at residues 207-235 and 248-300; these read IEKQ…AELP and TGMS…PTRV. Residues 213–228 show a composition bias toward low complexity; it reads PSPTSPVKPSSPASKP. A phosphoserine mark is found at Ser281, Ser293, Ser314, Ser335, and Ser360. The SH3-binding signature appears at 281-292; sequence SPPPALPPKKRQ. Disordered stretches follow at residues 336–376 and 411–494; these read GGSH…QCSR and LSPL…EDLQ. The segment covering 358–371 has biased composition (basic and acidic residues); that stretch reads SKSDEQLSSLDRDS. The SH3-binding signature appears at 451–462; it reads DTPPALPEKKRR. Residues 484–494 are compositionally biased toward polar residues; sequence QYDNISGEDLQ. Tyr504 carries the post-translational modification Phosphotyrosine; by HCK. 2 short sequence motifs (SH3-binding) span residues 538 to 549 and 606 to 617; these read EKPPPLPEKKNK and APPPALPPKQRQ. The segment at 600-670 is disordered; sequence DSVQELAPPP…SEEEVDELSL (71 aa). Basic and acidic residues predominate over residues 640–651; the sequence is KDSRDGSERAPK. Acidic residues predominate over residues 660 to 669; it reads QSEEEVDELS. One can recognise an N-terminal Ras-GEF domain in the interval 688–810; the sequence is DGPDVRGGSG…LRKNILDKVD (123 aa). In terms of domain architecture, Ras-GEF spans 840-1064; it reads HSHEIAEQLT…WELSLKIKPR (225 aa).

As to quaternary structure, interacts with HCK (via SH3-binding sites). Interacts with CRK (via SH3-binding sites). In terms of processing, phosphorylation at Tyr-504 enhances activity as Rap guanine nucleotide exchange factor. In terms of tissue distribution, ubiquitously expressed in adult and fetus. Expression is high in adult skeletal muscle and placenta and in fetal brain and heart. Low levels of expression in adult and fetal liver.

The protein localises to the early endosome. Functionally, guanine nucleotide-releasing protein that binds to SH3 domain of CRK and GRB2/ASH. Transduces signals from CRK to activate RAS. Involved in cell branching and adhesion mediated by BCAR1-CRK-RAPGEF1 signaling and activation of RAP1. Plays a role in the establishment of basal endothelial barrier function. Plays a role in nerve growth factor (NGF)-induced sustained activation of Rap1 and neurite outgrowth. The polypeptide is Rap guanine nucleotide exchange factor 1 (RAPGEF1) (Homo sapiens (Human)).